The primary structure comprises 215 residues: Ras-related protein SEC4 (215 aa).

27 to 34 is a GTP binding site; the sequence is GDSGVGKS. Positions 49 to 57 match the Effector region motif; sequence FITTIGIDF. Residues 75 to 79 and 133 to 136 contribute to the GTP site; these read DTAGQ and NKSD. Residues serine 201 and serine 204 each carry the phosphoserine modification. Residues cysteine 214 and cysteine 215 are each lipidated (S-geranylgeranyl cysteine).

This sequence belongs to the small GTPase superfamily. Rab family. As to quaternary structure, interacts with the guanyl-nucleotide exchange factor SEC2. Interacts with SRO7, YIF1, YIP3, YIP4 and YIP5.

It localises to the cytoplasmic vesicle. The protein localises to the secretory vesicle membrane. It is found in the cell membrane. The protein resides in the cytoplasm. Functionally, involved in exocytosis. Maybe by regulating the binding and fusion of secretory vesicles with the cell surface. The GTP-bound form of SEC4 may interact with an effector, thereby stimulating its activity and leading to exocytotic fusion. SEC4 may be an upstream activator of the 19.5S SEC8/SEC15 particle. SEC4 probably interacts directly with SEC8; it could serve as the attachment site for the SEC8/SEC15 particle. This is Ras-related protein SEC4 (SEC4) from Saccharomyces cerevisiae (strain ATCC 204508 / S288c) (Baker's yeast).